Reading from the N-terminus, the 335-residue chain is Vitamin B12 import system permease protein BtuC (335 aa).

A run of 9 helical transmembrane segments spans residues F21–W43, F63–V82, G95–F114, P119–F141, L153–T175, W195–S212, F244–V266, T281–L303, and V310–L329.

It belongs to the binding-protein-dependent transport system permease family. FecCD subfamily. In terms of assembly, the complex is composed of two ATP-binding proteins (BtuD), two transmembrane proteins (BtuC) and a solute-binding protein (BtuF).

Its subcellular location is the cell inner membrane. In terms of biological role, part of the ABC transporter complex BtuCDF involved in vitamin B12 import. Involved in the translocation of the substrate across the membrane. The chain is Vitamin B12 import system permease protein BtuC from Photorhabdus laumondii subsp. laumondii (strain DSM 15139 / CIP 105565 / TT01) (Photorhabdus luminescens subsp. laumondii).